Here is a 665-residue protein sequence, read N- to C-terminus: mRNA cleavage and polyadenylation factor CLP1 (665 aa).

ATP is bound by residues lysine 91 and 195–200 (SAGKTS). Disordered stretches follow at residues 218 to 283 (VKEG…SQAK) and 593 to 615 (PPPR…HDYE). 2 stretches are compositionally biased toward basic and acidic residues: residues 219 to 238 (KEGD…EIHP) and 598 to 614 (QSKD…HHDY).

It belongs to the Clp1 family. Clp1 subfamily. In terms of assembly, component of a pre-mRNA cleavage factor complex. Interacts directly with PCF11.

Its subcellular location is the nucleus. Functionally, required for endonucleolytic cleavage during polyadenylation-dependent pre-mRNA 3'-end formation. The polypeptide is mRNA cleavage and polyadenylation factor CLP1 (Malassezia globosa (strain ATCC MYA-4612 / CBS 7966) (Dandruff-associated fungus)).